We begin with the raw amino-acid sequence, 35 residues long: Photosystem II reaction center protein T (35 aa).

A helical transmembrane segment spans residues 3-23 (ALVYTFLLIGTLGIIFFAIFF).

It belongs to the PsbT family. As to quaternary structure, PSII is composed of 1 copy each of membrane proteins PsbA, PsbB, PsbC, PsbD, PsbE, PsbF, PsbH, PsbI, PsbJ, PsbK, PsbL, PsbM, PsbT, PsbY, PsbZ, Psb30/Ycf12, at least 3 peripheral proteins of the oxygen-evolving complex and a large number of cofactors. It forms dimeric complexes.

It is found in the plastid. Its subcellular location is the chloroplast thylakoid membrane. Its function is as follows. Found at the monomer-monomer interface of the photosystem II (PS II) dimer, plays a role in assembly and dimerization of PSII. PSII is a light-driven water plastoquinone oxidoreductase, using light energy to abstract electrons from H(2)O, generating a proton gradient subsequently used for ATP formation. This is Photosystem II reaction center protein T from Coleochaete orbicularis (Charophycean green alga).